The primary structure comprises 167 residues: Small ribosomal subunit protein uS5 (167 aa).

The S5 DRBM domain maps to 11–74 (LQEKLIAVNR…EKARRAMINV (64 aa)).

Belongs to the universal ribosomal protein uS5 family. In terms of assembly, part of the 30S ribosomal subunit. Contacts proteins S4 and S8.

In terms of biological role, with S4 and S12 plays an important role in translational accuracy. Its function is as follows. Located at the back of the 30S subunit body where it stabilizes the conformation of the head with respect to the body. The sequence is that of Small ribosomal subunit protein uS5 from Serratia proteamaculans (strain 568).